The primary structure comprises 195 residues: Glycerol-3-phosphate acyltransferase (195 aa).

The next 5 membrane-spanning stretches (helical) occupy residues 3–23 (EAAL…YFFT), 51–71 (GVAL…AWIG), 79–99 (LLVI…FLGF), 111–131 (IILF…LAIV), and 153–173 (LAMG…ALVV).

The protein belongs to the PlsY family. As to quaternary structure, probably interacts with PlsX.

The protein resides in the cell membrane. It catalyses the reaction an acyl phosphate + sn-glycerol 3-phosphate = a 1-acyl-sn-glycero-3-phosphate + phosphate. Its pathway is lipid metabolism; phospholipid metabolism. In terms of biological role, catalyzes the transfer of an acyl group from acyl-phosphate (acyl-PO(4)) to glycerol-3-phosphate (G3P) to form lysophosphatidic acid (LPA). This enzyme utilizes acyl-phosphate as fatty acyl donor, but not acyl-CoA or acyl-ACP. The protein is Glycerol-3-phosphate acyltransferase of Syntrophomonas wolfei subsp. wolfei (strain DSM 2245B / Goettingen).